We begin with the raw amino-acid sequence, 136 residues long: Transport protein particle 20 kDa subunit (136 aa).

Belongs to the TRAPP small subunits family. Sedlin subfamily.

Its subcellular location is the cytoplasm. The protein resides in the golgi apparatus. It is found in the cis-Golgi network. The protein localises to the endoplasmic reticulum. Functionally, component of the TRAPP I and TRAPP II complexes. TRAPP I plays a key role in the late stages of endoplasmic reticulum to Golgi traffic. TRAPP II seems to play a role in intra-Golgi transport. The polypeptide is Transport protein particle 20 kDa subunit (trs20) (Schizosaccharomyces pombe (strain 972 / ATCC 24843) (Fission yeast)).